A 466-amino-acid chain; its full sequence is Soluble pyridine nucleotide transhydrogenase (466 aa).

Residue Glu36–Cys45 coordinates FAD.

Belongs to the class-I pyridine nucleotide-disulfide oxidoreductase family. Requires FAD as cofactor.

The protein resides in the cytoplasm. The enzyme catalyses NAD(+) + NADPH = NADH + NADP(+). Conversion of NADPH, generated by peripheral catabolic pathways, to NADH, which can enter the respiratory chain for energy generation. In Vibrio parahaemolyticus serotype O3:K6 (strain RIMD 2210633), this protein is Soluble pyridine nucleotide transhydrogenase.